The sequence spans 676 residues: Ribonuclease R (676 aa).

The region spanning 207-527 (RKDLRDLLCF…LIVHRLLFNP (321 aa)) is the RNB domain. Positions 566-651 (NKFLQEQPKT…LTQKIVWSIA (86 aa)) constitute an S1 motif domain. Residues 656 to 676 (DKPKKIKKTPSKKKGTKKRAS) form a disordered region. The span at 659–676 (KKIKKTPSKKKGTKKRAS) shows a compositional bias: basic residues.

The protein belongs to the RNR ribonuclease family. RNase R subfamily.

The protein resides in the cytoplasm. The catalysed reaction is Exonucleolytic cleavage in the 3'- to 5'-direction to yield nucleoside 5'-phosphates.. 3'-5' exoribonuclease that releases 5'-nucleoside monophosphates and is involved in maturation of structured RNAs. The protein is Ribonuclease R of Chlamydia pneumoniae (Chlamydophila pneumoniae).